Here is a 413-residue protein sequence, read N- to C-terminus: Hibernation-specific plasma protein HP-55 (413 aa).

The signal sequence occupies residues 1–24; the sequence is MPSSISWGLLLLAALSCLGPGSLA. Pyrrolidone carboxylic acid is present on Q25. N-linked (GlcNAc...) asparagine glycosylation is found at N65, N102, N165, and N266. Residues 368-387 are RCL; sequence GGTVLGAEAMLQAPIMKFDR.

This sequence belongs to the serpin family. Plasma proteins HP-20, HP-25, HP-27 and HP-55 form a 140 kDa complex via disulfide bonds in the plasma. Post-translationally, the N-terminus is blocked. In terms of tissue distribution, plasma; synthesized in the liver.

The protein resides in the secreted. In terms of biological role, protease inhibitor. The polypeptide is Hibernation-specific plasma protein HP-55 (Tamias sibiricus (Siberian chipmunk)).